A 116-amino-acid chain; its full sequence is CDKN2AIP N-terminal-like protein (116 aa).

Residue methionine 1 is modified to N-acetylmethionine. One can recognise an XRN2-binding (XTBD) domain in the interval 24–116 (AEQFRSYSES…RSELMKKHQS (93 aa)).

Belongs to the CARF family. As to quaternary structure, interacts with XRN2; the interaction is direct.

The sequence is that of CDKN2AIP N-terminal-like protein (CDKN2AIPNL) from Homo sapiens (Human).